A 641-amino-acid chain; its full sequence is Serine/threonine-protein kinase pink-1, mitochondrial (641 aa).

The N-terminal 74 residues, 1-74 (MSMKRFGKAA…TRHGRVFRPF (74 aa)), are a transit peptide targeting the mitochondrion. One can recognise a Protein kinase domain in the interval 137-483 (YEFGEFLGQG…AANALNLSLF (347 aa)). Residues 143–151 (LGQGCNAAV) and Lys199 each bind ATP. Residue Asp338 is the Proton acceptor of the active site.

Belongs to the protein kinase superfamily. Ser/Thr protein kinase family. Requires Mg(2+) as cofactor. Autophosphorylated.

Its subcellular location is the mitochondrion. It carries out the reaction L-seryl-[protein] + ATP = O-phospho-L-seryl-[protein] + ADP + H(+). The enzyme catalyses L-threonyl-[protein] + ATP = O-phospho-L-threonyl-[protein] + ADP + H(+). Functionally, protects against mitochondrial dysfunction during cellular stress, potentially by phosphorylating mitochondrial proteins. Plays a role in mitophagy. This chain is Serine/threonine-protein kinase pink-1, mitochondrial (pink-1), found in Caenorhabditis elegans.